We begin with the raw amino-acid sequence, 440 residues long: Transposon Ty1-NL1 Gag polyprotein (440 aa).

4 stretches are compositionally biased toward polar residues: residues 1-23 (MESQ…SVTS), 48-60 (TKAN…TPAS), 71-86 (SPQT…GPYQ), and 131-152 (PQYP…GNTF). 3 disordered regions span residues 1–86 (MESQ…GPYQ), 131–171 (PQYP…YVRP), and 350–425 (QQES…TEPI). Over residues 153–165 (TDSSSADSDMTST) the composition is skewed to low complexity. The interval 299–401 (NNGIPINNKV…NSQSRTARAH (103 aa)) is RNA-binding. A compositionally biased stretch (basic and acidic residues) spans 363 to 372 (NPSDEKKDSR). Residues 373–412 (TYTNTTKPKSITRNSQKPNNSQSRTARAHNVSTSNNSSGP) show a composition bias toward polar residues.

Homotrimer.

The protein localises to the cytoplasm. Its function is as follows. Capsid protein (CA) is the structural component of the virus-like particle (VLP), forming the shell that encapsulates the retrotransposons dimeric RNA genome. The particles are assembled from trimer-clustered units and there are holes in the capsid shells that allow for the diffusion of macromolecules. CA also has nucleocapsid-like chaperone activity, promoting primer tRNA(i)-Met annealing to the multipartite primer-binding site (PBS), dimerization of Ty1 RNA and initiation of reverse transcription. This Saccharomyces cerevisiae (strain ATCC 204508 / S288c) (Baker's yeast) protein is Transposon Ty1-NL1 Gag polyprotein (TY1A-NL1).